Consider the following 1415-residue polypeptide: DNA-directed RNA polymerase subunit beta' (1415 aa).

Zn(2+) is bound by residues Cys-70, Cys-72, Cys-85, and Cys-88. Residues Asp-461, Asp-463, and Asp-465 each contribute to the Mg(2+) site. Positions 820, 894, 901, and 904 each coordinate Zn(2+).

Belongs to the RNA polymerase beta' chain family. The RNAP catalytic core consists of 2 alpha, 1 beta, 1 beta' and 1 omega subunit. When a sigma factor is associated with the core the holoenzyme is formed, which can initiate transcription. It depends on Mg(2+) as a cofactor. Zn(2+) serves as cofactor.

It catalyses the reaction RNA(n) + a ribonucleoside 5'-triphosphate = RNA(n+1) + diphosphate. Its function is as follows. DNA-dependent RNA polymerase catalyzes the transcription of DNA into RNA using the four ribonucleoside triphosphates as substrates. The protein is DNA-directed RNA polymerase subunit beta' of Cupriavidus necator (strain ATCC 17699 / DSM 428 / KCTC 22496 / NCIMB 10442 / H16 / Stanier 337) (Ralstonia eutropha).